Here is a 216-residue protein sequence, read N- to C-terminus: Fucoxanthin-chlorophyll a-c binding protein C, chloroplastic (216 aa).

A chloroplast-targeting transit peptide spans 1 to 38 (MKSAIMAVASAAPGLRGPSAFNGAALTTSAKSSSAMKM). Transmembrane regions (helical) follow at residues 80–100 (IAMLAIAGHLTQQNARLPGML), 121–141 (IPPGGLAQIFGFIGFLELAVM), and 182–202 (GRAAQMGILALMVHEELNNKP).

Belongs to the fucoxanthin chlorophyll protein family. In terms of assembly, the LHC complex of chromophytic algae is composed of fucoxanthin, chlorophyll A and C bound non-covalently by fucoxanthin chlorophyll proteins (FCPs). The ratio of pigments in this LHC is; fucoxanthin: chlorophyll C: chlorophyll A; (0.6-1): (0.1-0.3): (1).

Its subcellular location is the plastid. It is found in the chloroplast thylakoid membrane. In terms of biological role, the light-harvesting complex (LHC) functions as a light receptor, it captures and delivers excitation energy to photosystems with which it is closely associated. Energy is transferred from the carotenoid and chlorophyll C (or B) to chlorophyll A and the photosynthetic reaction centers where it is used to synthesize ATP and reducing power. The protein is Fucoxanthin-chlorophyll a-c binding protein C, chloroplastic (FCPC) of Macrocystis pyrifera (Giant kelp).